The sequence spans 546 residues: Probable lysosomal cobalamin transporter (546 aa).

The next 4 helical transmembrane spans lie at 8–28 (LAQGWIPFTVVVVLAILFSWF), 48–68 (IIALFIALMTTALVPVDIFLV), 102–122 (ILYALLAFFVFVIIPFMYFFF), and 141–161 (YSIGFLIVASVLLLVGAFAPL). N167 carries an N-linked (GlcNAc...) asparagine glycan. 4 helical membrane-spanning segments follow: residues 189–209 (TALSLLIGFLTLIGMLIMITY), 304–324 (MVFGAFFLLVALLIFVSLFIT), 352–372 (IIMVYAQIVFPLDYCLFLLVV), and 407–427 (ALLFMCVMLMLIVLSLNVMLF). N-linked (GlcNAc...) asparagine glycosylation is found at N444, N452, and N459. Residues 495 to 515 (VWFFGACYYWGTWLFLVVFMT) form a helical membrane-spanning segment.

This sequence belongs to the LIMR family. LMBRD1 subfamily.

Its subcellular location is the lysosome membrane. Its function is as follows. Probable lysosomal cobalamin transporter. Required to export cobalamin from lysosomes allowing its conversion to cofactors. In Nematostella vectensis (Starlet sea anemone), this protein is Probable lysosomal cobalamin transporter.